A 416-amino-acid chain; its full sequence is Glutamyl-tRNA reductase (416 aa).

Substrate contacts are provided by residues 49–52 (TCNR), S105, 110–112 (EPQ), and Q116. C50 serves as the catalytic Nucleophile. Position 185–190 (185–190 (GAGETI)) interacts with NADP(+).

Belongs to the glutamyl-tRNA reductase family. Homodimer.

It catalyses the reaction (S)-4-amino-5-oxopentanoate + tRNA(Glu) + NADP(+) = L-glutamyl-tRNA(Glu) + NADPH + H(+). It participates in porphyrin-containing compound metabolism; protoporphyrin-IX biosynthesis; 5-aminolevulinate from L-glutamyl-tRNA(Glu): step 1/2. In terms of biological role, catalyzes the NADPH-dependent reduction of glutamyl-tRNA(Glu) to glutamate 1-semialdehyde (GSA). The protein is Glutamyl-tRNA reductase of Shewanella pealeana (strain ATCC 700345 / ANG-SQ1).